Reading from the N-terminus, the 870-residue chain is NEDD4-like E3 ubiquitin-protein ligase WWP2 (870 aa).

Residues 1 to 117 enclose the C2 domain; sequence MASASSSRAG…KNNGGKMENM (117 aa). The segment at 151-299 is disordered; that stretch reads VPNGSALTDG…QQLPAAAQAP (149 aa). Composition is skewed to polar residues over residues 152–171 and 200–210; these read PNGS…SSGT and SARTTPATGEQ. The residue at position 211 (Ser-211) is a Phosphoserine. Composition is skewed to polar residues over residues 222–243 and 263–272; these read VKNS…TTAT and VTPNPNTTSL. Positions 290 to 299 are enriched in low complexity; the sequence is QQLPAAAQAP. WW domains follow at residues 300–333, 330–363, 405–437, and 444–477; these read DALP…RPLP, RPLP…RPTA, GPLP…DPRT, and PALP…DPRP. Positions 536 to 870 constitute an HECT domain; the sequence is KPYDLRRRLY…IEETEGFGQE (335 aa). Cys-838 acts as the Glycyl thioester intermediate in catalysis.

As to quaternary structure, interacts with POU5F1, RBP1, EGR2 and SLC11A2. Interacts with SCNN1A, SCNN1B, SCNN1G, WBP1, WBP2 and ATN1. Interacts with ERBB4, NDFIP1 and NDFIP2. Interacts with ARRDC4. Interacts (via WW domains) with ARRDC1 (via PPxY motifs); ubiquitinates ARRDC1. Interacts (via WW domains) with ARRDC2 and ARRDC3. (Microbial infection) Interacts with adenovirus type 2 PIII. In terms of processing, autoubiquitinated. Ubiquitinated by the SCF(FBXL15) complex, leading to its degradation by the proteasome. Detected in heart, throughout the brain, placenta, lung, liver, muscle, kidney and pancreas. Also detected in spleen and peripheral blood leukocytes.

Its subcellular location is the nucleus. It catalyses the reaction S-ubiquitinyl-[E2 ubiquitin-conjugating enzyme]-L-cysteine + [acceptor protein]-L-lysine = [E2 ubiquitin-conjugating enzyme]-L-cysteine + N(6)-ubiquitinyl-[acceptor protein]-L-lysine.. The protein operates within protein modification; protein ubiquitination. Activated by NDFIP1- and NDFIP2-binding. In terms of biological role, E3 ubiquitin-protein ligase which accepts ubiquitin from an E2 ubiquitin-conjugating enzyme in the form of a thioester and then directly transfers the ubiquitin to targeted substrates. Polyubiquitinates POU5F1 by 'Lys-63'-linked conjugation and promotes it to proteasomal degradation; in embryonic stem cells (ESCs) the ubiquitination is proposed to regulate POU5F1 protein level. Ubiquitinates EGR2 and promotes it to proteasomal degradation; in T-cells the ubiquitination inhibits activation-induced cell death. Ubiquitinates SLC11A2; the ubiquitination is enhanced by presence of NDFIP1 and NDFIP2. Ubiquitinates RPB1 and promotes it to proteasomal degradation. The protein is NEDD4-like E3 ubiquitin-protein ligase WWP2 (WWP2) of Homo sapiens (Human).